A 1577-amino-acid chain; its full sequence is Vacuolar protein sorting/targeting protein PEP1 (1577 aa).

An N-terminal signal peptide occupies residues 1 to 21; the sequence is MILLHFVYSLWALLLIPLINA. Residues 22–1391 lie on the Lumenal side of the membrane; that stretch reads EEFTPKVTKT…EFKEKYSVSA (1370 aa). 2 BNR repeats span residues 58–68 and 101–111; these read ISFDDGETWEK and YITNDQGKSWE. N-linked (GlcNAc...) asparagine glycans are attached at residues N121 and N168. BNR repeat units lie at residues 179-187 and 414-423; these read SNDGGKSFS and ISVDNGLTWT. N445 carries an N-linked (GlcNAc...) asparagine glycan. BNR repeat units follow at residues 485-495, 531-541, and 762-771; these read FISRDGGLTWK, YYSLDQGKTWT, and YISHDGGQTI. Residue N791 is glycosylated (N-linked (GlcNAc...) asparagine). The stretch at 859–869 is one BNR 8 repeat; that stretch reads YLTNDGGETFT. A glycan (N-linked (GlcNAc...) asparagine) is linked at N1008. BNR repeat units lie at residues 1141–1150 and 1183–1192; these read FFTTDGGETW and YSTDFGKTWK. N1301 carries an N-linked (GlcNAc...) asparagine glycan. The helical transmembrane segment at 1392–1412 threads the bilayer; it reads GPFAFIFISILLIIFFAAWFV. The Cytoplasmic portion of the chain corresponds to 1413 to 1577; that stretch reads YDRGIRRNGG…DSTAPSNENQ (165 aa). The segment at 1531-1577 is disordered; it reads DDVPTLEEEHTSYTDQPTTTDVPDALPEGNEENIDRPDSTAPSNENQ.

The protein belongs to the VPS10-related sortilin family.

It is found in the golgi apparatus. Its subcellular location is the trans-Golgi network membrane. The protein localises to the prevacuolar compartment membrane. In terms of biological role, functions as a sorting receptor in the Golgi compartment required for the intracellular sorting and delivery of soluble vacuolar proteins, like carboxypeptidase Y (CPY) and proteinase A. Executes multiple rounds of sorting by cycling between the late Golgi and a prevacuolar endosome-like compartment. Binds the Golgi-modified P2 form of CPY, and this interaction is dependent on the presence of an intact CPY vacuolar protein sorting signal. The protein is Vacuolar protein sorting/targeting protein PEP1 (PEP1) of Saccharomyces cerevisiae (strain JAY291) (Baker's yeast).